The primary structure comprises 865 residues: Protein translocase subunit SecA (865 aa).

ATP is bound by residues Gln85, 103–107 (GEGKT), and Asp505. Residues Cys847, Cys849, Cys858, and His859 each coordinate Zn(2+).

Belongs to the SecA family. As to quaternary structure, monomer and homodimer. Part of the essential Sec protein translocation apparatus which comprises SecA, SecYEG and auxiliary proteins SecDF. Other proteins may also be involved. Zn(2+) serves as cofactor.

The protein resides in the cell membrane. It is found in the cytoplasm. The catalysed reaction is ATP + H2O + cellular proteinSide 1 = ADP + phosphate + cellular proteinSide 2.. Part of the Sec protein translocase complex. Interacts with the SecYEG preprotein conducting channel. Has a central role in coupling the hydrolysis of ATP to the transfer of proteins into and across the cell membrane, serving as an ATP-driven molecular motor driving the stepwise translocation of polypeptide chains across the membrane. The protein is Protein translocase subunit SecA of Lactococcus lactis subsp. cremoris (strain SK11).